Reading from the N-terminus, the 94-residue chain is Integration host factor subunit beta (94 aa).

Belongs to the bacterial histone-like protein family. Heterodimer of an alpha and a beta chain.

Its function is as follows. This protein is one of the two subunits of integration host factor, a specific DNA-binding protein that functions in genetic recombination as well as in transcriptional and translational control. The protein is Integration host factor subunit beta of Serratia proteamaculans (strain 568).